Here is a 37-residue protein sequence, read N- to C-terminus: Large ribosomal subunit protein bL36 (37 aa).

The protein belongs to the bacterial ribosomal protein bL36 family.

The protein is Large ribosomal subunit protein bL36 of Treponema pallidum (strain Nichols).